A 55-amino-acid polypeptide reads, in one-letter code: Large ribosomal subunit protein uL15 (55 aa).

This sequence belongs to the universal ribosomal protein uL15 family. In terms of assembly, part of the 50S ribosomal subunit.

Its function is as follows. Binds to the 23S rRNA. The sequence is that of Large ribosomal subunit protein uL15 (rplO) from Lactococcus lactis subsp. cremoris (Streptococcus cremoris).